We begin with the raw amino-acid sequence, 385 residues long: 8-amino-7-oxononanoate synthase (385 aa).

Arginine 21 contacts substrate. Pyridoxal 5'-phosphate is bound at residue 108–109 (GF). Residue histidine 133 coordinates substrate. 3 residues coordinate pyridoxal 5'-phosphate: serine 179, histidine 207, and threonine 233. Lysine 236 is subject to N6-(pyridoxal phosphate)lysine. Substrate is bound at residue threonine 352.

This sequence belongs to the class-II pyridoxal-phosphate-dependent aminotransferase family. BioF subfamily. In terms of assembly, homodimer. Pyridoxal 5'-phosphate is required as a cofactor.

It carries out the reaction 6-carboxyhexanoyl-[ACP] + L-alanine + H(+) = (8S)-8-amino-7-oxononanoate + holo-[ACP] + CO2. Its pathway is cofactor biosynthesis; biotin biosynthesis. In terms of biological role, catalyzes the decarboxylative condensation of pimeloyl-[acyl-carrier protein] and L-alanine to produce 8-amino-7-oxononanoate (AON), [acyl-carrier protein], and carbon dioxide. In Salmonella typhimurium (strain LT2 / SGSC1412 / ATCC 700720), this protein is 8-amino-7-oxononanoate synthase.